The chain runs to 218 residues: Uracil-DNA glycosylase (218 aa).

The protein belongs to the uracil-DNA glycosylase (UDG) superfamily. UNG family. As to quaternary structure, homodimer. Interacts with protein OPG148. Component of the Uracil-DNA glycosylase(UDG)-OPG148-polymerase complex; OPG148 and UDG form a heterodimeric processivity factor that associates with OPG71 to form the processive polymerase holoenzyme.

The catalysed reaction is Hydrolyzes single-stranded DNA or mismatched double-stranded DNA and polynucleotides, releasing free uracil.. Plays an essential role in viral replication as a component of the DNA polymerase processivity factor. Excises uracil residues from the DNA which can arise as a result of misincorporation of dUMP residues by DNA polymerase or due to deamination of cytosine. In Monkeypox virus, this protein is Uracil-DNA glycosylase (OPG116).